The following is a 210-amino-acid chain: Holliday junction branch migration complex subunit RuvA (210 aa).

The interval 1-64 is domain I; sequence MIGLIEGRVC…EDAQLLYGFL (64 aa). The interval 65 to 143 is domain II; sequence HPTERDVFRQ…HIQSDMSLLT (79 aa). The interval 144–154 is flexible linker; sequence EVEQQIGIAAN. The segment at 155-210 is domain III; the sequence is SEGVILAEVESALISLGYRDKEAQQAIKAARETDAGQQLVDTQSLLKLTLKQLSNF.

The protein belongs to the RuvA family. In terms of assembly, homotetramer. Forms an RuvA(8)-RuvB(12)-Holliday junction (HJ) complex. HJ DNA is sandwiched between 2 RuvA tetramers; dsDNA enters through RuvA and exits via RuvB. An RuvB hexamer assembles on each DNA strand where it exits the tetramer. Each RuvB hexamer is contacted by two RuvA subunits (via domain III) on 2 adjacent RuvB subunits; this complex drives branch migration. In the full resolvosome a probable DNA-RuvA(4)-RuvB(12)-RuvC(2) complex forms which resolves the HJ.

Its subcellular location is the cytoplasm. Its function is as follows. The RuvA-RuvB-RuvC complex processes Holliday junction (HJ) DNA during genetic recombination and DNA repair, while the RuvA-RuvB complex plays an important role in the rescue of blocked DNA replication forks via replication fork reversal (RFR). RuvA specifically binds to HJ cruciform DNA, conferring on it an open structure. The RuvB hexamer acts as an ATP-dependent pump, pulling dsDNA into and through the RuvAB complex. HJ branch migration allows RuvC to scan DNA until it finds its consensus sequence, where it cleaves and resolves the cruciform DNA. This chain is Holliday junction branch migration complex subunit RuvA, found in Psychrobacter sp. (strain PRwf-1).